The sequence spans 231 residues: Proteasome subunit alpha type-2 (231 aa).

It belongs to the peptidase T1A family. As to quaternary structure, the 26S proteasome consists of a 20S proteasome core and two 19S regulatory subunits. The 20S proteasome core is composed of 28 subunits that are arranged in four stacked rings, resulting in a barrel-shaped structure. The two end rings are each formed by seven alpha subunits, and the two central rings are each formed by seven beta subunits. The catalytic chamber with the active sites is on the inside of the barrel.

The protein localises to the cytoplasm. It localises to the nucleus. Functionally, the proteasome is a multicatalytic proteinase complex which is characterized by its ability to cleave peptides with Arg, Phe, Tyr, Leu, and Glu adjacent to the leaving group at neutral or slightly basic pH. The proteasome has an ATP-dependent proteolytic activity. This is Proteasome subunit alpha type-2 (pas-2) from Caenorhabditis elegans.